A 415-amino-acid polypeptide reads, in one-letter code: Lipoyl synthase, mitochondrial (415 aa).

The N-terminal 33 residues, M1–Y33, are a transit peptide targeting the mitochondrion. 7 residues coordinate [4Fe-4S] cluster: C132, C137, C143, C163, C167, C170, and S378. Residues D148 to L367 enclose the Radical SAM core domain.

The protein belongs to the radical SAM superfamily. Lipoyl synthase family. [4Fe-4S] cluster is required as a cofactor.

It is found in the mitochondrion. The enzyme catalyses [[Fe-S] cluster scaffold protein carrying a second [4Fe-4S](2+) cluster] + N(6)-octanoyl-L-lysyl-[protein] + 2 oxidized [2Fe-2S]-[ferredoxin] + 2 S-adenosyl-L-methionine + 4 H(+) = [[Fe-S] cluster scaffold protein] + N(6)-[(R)-dihydrolipoyl]-L-lysyl-[protein] + 4 Fe(3+) + 2 hydrogen sulfide + 2 5'-deoxyadenosine + 2 L-methionine + 2 reduced [2Fe-2S]-[ferredoxin]. It functions in the pathway protein modification; protein lipoylation via endogenous pathway; protein N(6)-(lipoyl)lysine from octanoyl-[acyl-carrier-protein]: step 2/2. In terms of biological role, catalyzes the radical-mediated insertion of two sulfur atoms into the C-6 and C-8 positions of the octanoyl moiety bound to the lipoyl domains of lipoate-dependent enzymes, thereby converting the octanoylated domains into lipoylated derivatives. The sequence is that of Lipoyl synthase, mitochondrial from Aspergillus clavatus (strain ATCC 1007 / CBS 513.65 / DSM 816 / NCTC 3887 / NRRL 1 / QM 1276 / 107).